Here is a 155-residue protein sequence, read N- to C-terminus: Ribosomal RNA large subunit methyltransferase H (155 aa).

S-adenosyl-L-methionine-binding positions include leucine 72, glycine 103, and 122–127 (LSDLTL).

It belongs to the RNA methyltransferase RlmH family. As to quaternary structure, homodimer.

The protein localises to the cytoplasm. It carries out the reaction pseudouridine(1915) in 23S rRNA + S-adenosyl-L-methionine = N(3)-methylpseudouridine(1915) in 23S rRNA + S-adenosyl-L-homocysteine + H(+). Functionally, specifically methylates the pseudouridine at position 1915 (m3Psi1915) in 23S rRNA. The protein is Ribosomal RNA large subunit methyltransferase H of Polaromonas naphthalenivorans (strain CJ2).